The following is an 87-amino-acid chain: Small ribosomal subunit protein bS20 (87 aa).

This sequence belongs to the bacterial ribosomal protein bS20 family.

Functionally, binds directly to 16S ribosomal RNA. In Shigella flexneri, this protein is Small ribosomal subunit protein bS20.